Here is a 448-residue protein sequence, read N- to C-terminus: UDP-N-acetylmuramoylalanine--D-glutamate ligase (448 aa).

116-122 (GSNAKST) is an ATP binding site.

This sequence belongs to the MurCDEF family.

It localises to the cytoplasm. It catalyses the reaction UDP-N-acetyl-alpha-D-muramoyl-L-alanine + D-glutamate + ATP = UDP-N-acetyl-alpha-D-muramoyl-L-alanyl-D-glutamate + ADP + phosphate + H(+). The protein operates within cell wall biogenesis; peptidoglycan biosynthesis. Its function is as follows. Cell wall formation. Catalyzes the addition of glutamate to the nucleotide precursor UDP-N-acetylmuramoyl-L-alanine (UMA). This Pseudomonas savastanoi pv. phaseolicola (strain 1448A / Race 6) (Pseudomonas syringae pv. phaseolicola (strain 1448A / Race 6)) protein is UDP-N-acetylmuramoylalanine--D-glutamate ligase.